Reading from the N-terminus, the 497-residue chain is Putative aldehyde dehydrogenase AldA (497 aa).

Position 213–219 (213–219 (GKGSESG)) interacts with NAD(+). Residues glutamate 257 and cysteine 291 contribute to the active site.

This sequence belongs to the aldehyde dehydrogenase family.

It carries out the reaction an aldehyde + NAD(+) + H2O = a carboxylate + NADH + 2 H(+). This is Putative aldehyde dehydrogenase AldA (aldA) from Staphylococcus haemolyticus (strain JCSC1435).